Consider the following 276-residue polypeptide: Pantothenate synthetase (276 aa).

27–34 (MGALHRGH) contributes to the ATP binding site. His34 serves as the catalytic Proton donor. Gln58 provides a ligand contact to (R)-pantoate. Position 58 (Gln58) interacts with beta-alanine. Position 147-150 (147-150 (GKKD)) interacts with ATP. Position 153 (Gln153) interacts with (R)-pantoate. ATP-binding positions include Val176 and 184 to 187 (LSSR).

This sequence belongs to the pantothenate synthetase family. As to quaternary structure, homodimer.

Its subcellular location is the cytoplasm. The catalysed reaction is (R)-pantoate + beta-alanine + ATP = (R)-pantothenate + AMP + diphosphate + H(+). Its pathway is cofactor biosynthesis; (R)-pantothenate biosynthesis; (R)-pantothenate from (R)-pantoate and beta-alanine: step 1/1. Its function is as follows. Catalyzes the condensation of pantoate with beta-alanine in an ATP-dependent reaction via a pantoyl-adenylate intermediate. The polypeptide is Pantothenate synthetase (Helicobacter pylori (strain J99 / ATCC 700824) (Campylobacter pylori J99)).